The primary structure comprises 258 residues: Triosephosphate isomerase (258 aa).

N11 to K13 provides a ligand contact to substrate. The active-site Electrophile is H101. E173 acts as the Proton acceptor in catalysis. Substrate-binding positions include G179, S219, and G240–G241.

It belongs to the triosephosphate isomerase family. Homodimer.

The protein resides in the cytoplasm. It carries out the reaction D-glyceraldehyde 3-phosphate = dihydroxyacetone phosphate. It participates in carbohydrate biosynthesis; gluconeogenesis. The protein operates within carbohydrate degradation; glycolysis; D-glyceraldehyde 3-phosphate from glycerone phosphate: step 1/1. Its function is as follows. Involved in the gluconeogenesis. Catalyzes stereospecifically the conversion of dihydroxyacetone phosphate (DHAP) to D-glyceraldehyde-3-phosphate (G3P). The sequence is that of Triosephosphate isomerase from Streptomyces avermitilis (strain ATCC 31267 / DSM 46492 / JCM 5070 / NBRC 14893 / NCIMB 12804 / NRRL 8165 / MA-4680).